Reading from the N-terminus, the 348-residue chain is Neutral peroxidase (348 aa).

The first 20 residues, 1-20 (MASFVARLTLALSFIALALA), serve as a signal peptide directing secretion. A propeptide spanning residues 21-67 (GYSLVQNTLSSPTHTRLNLIPTWLDSTFDSADVLSYLGFGKSSGRLS) is cleaved from the precursor. Disulfide bonds link C71/C149, C102/C107, C156/C344, and C235/C256. The Proton acceptor role is filled by H100. 4 residues coordinate Ca(2+): D101, V104, G106, and D108. N-linked (GlcNAc...) asparagine glycans are attached at residues N114, N118, N173, N177, and N189. Position 198 (P198) interacts with substrate. N203 carries an N-linked (GlcNAc...) asparagine glycan. H228 is a binding site for heme b. T229 contacts Ca(2+). N-linked (GlcNAc...) asparagine glycans are attached at residues N247 and N261. Ca(2+) is bound by residues D269, S271, and D276. N300 carries N-linked (GlcNAc...) asparagine glycosylation.

The protein belongs to the peroxidase family. Classical plant (class III) peroxidase subfamily. The cofactor is Ca(2+). It depends on heme b as a cofactor. As to expression, highly expressed in suspension cultured cells. Weak expression also found in the stems of intact plants. No expression in leaf, tuberous root and non-tuberous root.

The protein resides in the secreted. It catalyses the reaction 2 a phenolic donor + H2O2 = 2 a phenolic radical donor + 2 H2O. Its function is as follows. Removal of H(2)O(2), oxidation of toxic reductants, biosynthesis and degradation of lignin, suberization, auxin catabolism, response to environmental stresses such as wounding, pathogen attack and oxidative stress. These functions might be dependent on each isozyme/isoform in each plant tissue. In terms of biological role, may contribute to protection against cold-induced oxidative stress. This Ipomoea batatas (Sweet potato) protein is Neutral peroxidase.